The sequence spans 117 residues: Holo-[acyl-carrier-protein] synthase (117 aa).

Residues D8 and E58 each contribute to the Mg(2+) site.

Belongs to the P-Pant transferase superfamily. AcpS family. Requires Mg(2+) as cofactor.

It is found in the cytoplasm. The catalysed reaction is apo-[ACP] + CoA = holo-[ACP] + adenosine 3',5'-bisphosphate + H(+). Its function is as follows. Transfers the 4'-phosphopantetheine moiety from coenzyme A to a Ser of acyl-carrier-protein. The chain is Holo-[acyl-carrier-protein] synthase from Shouchella clausii (strain KSM-K16) (Alkalihalobacillus clausii).